The following is a 51-amino-acid chain: Insulin (51 aa).

Cystine bridges form between Cys-7–Cys-37, Cys-19–Cys-50, and Cys-36–Cys-41.

The protein belongs to the insulin family. In terms of assembly, heterodimer of a B chain and an A chain linked by two disulfide bonds.

The protein localises to the secreted. Functionally, insulin decreases blood glucose concentration. It increases cell permeability to monosaccharides, amino acids and fatty acids. It accelerates glycolysis, the pentose phosphate cycle, and glycogen synthesis in liver. The protein is Insulin (INS) of Balaenoptera physalus (Fin whale).